The chain runs to 1399 residues: DNA-directed RNA polymerase subunit beta' (1399 aa).

Zn(2+) is bound by residues cysteine 70, cysteine 72, cysteine 85, and cysteine 88. 3 residues coordinate Mg(2+): aspartate 460, aspartate 462, and aspartate 464. Residues cysteine 814, cysteine 888, cysteine 895, and cysteine 898 each coordinate Zn(2+).

Belongs to the RNA polymerase beta' chain family. In terms of assembly, the RNAP catalytic core consists of 2 alpha, 1 beta, 1 beta' and 1 omega subunit. When a sigma factor is associated with the core the holoenzyme is formed, which can initiate transcription. Requires Mg(2+) as cofactor. The cofactor is Zn(2+).

The catalysed reaction is RNA(n) + a ribonucleoside 5'-triphosphate = RNA(n+1) + diphosphate. Functionally, DNA-dependent RNA polymerase catalyzes the transcription of DNA into RNA using the four ribonucleoside triphosphates as substrates. This Pseudomonas putida (strain ATCC 700007 / DSM 6899 / JCM 31910 / BCRC 17059 / LMG 24140 / F1) protein is DNA-directed RNA polymerase subunit beta'.